The sequence spans 328 residues: MAAVVVAAAGGAGPAVLQVAGLYRGLCAVRSRALGLGLVSPAQLRVFPVRPGSGRPEGGADSSGVGAEAELQANPFYDRYRDKIQLLRRSDPAAFESRLEKRSEFRKQPVGHSRQGDFIKCVEQKTDALGKQSVNRGFTKDKTLSSIFNIEMVKEKTAEEIKQIWQQYFAAKDTVYAVIPAEKFDLIWNRAQSCPTFLCALPRREGYEFFVGQWTGTELHFTALINIQTRGEAAASQLILYHYPELKEEKGIVLMTAEMDSTFLNVAEAQCIANQVQLFYATDRKETYGLVETFNLRPNEFKYMSVIAELEQSGLGAELKCAQNQNKT.

A mitochondrion-targeting transit peptide spans 1-57 (MAAVVVAAAGGAGPAVLQVAGLYRGLCAVRSRALGLGLVSPAQLRVFPVRPGSGRPE).

The protein belongs to the ATP11 family. In terms of assembly, interacts with ATP5F1B; involved in the assembly of the F1 component of the mitochondrial ATP synthase (ATPase). Weakly expressed in muscle.

The protein localises to the mitochondrion inner membrane. In terms of biological role, has a complex stabilizing activity in the assembly of the mitochondrial F1-F0 complex. The polypeptide is ATP synthase mitochondrial F1 complex assembly factor 1 (Homo sapiens (Human)).